Consider the following 491-residue polypeptide: UDP-N-acetylmuramate--L-alanine ligase (491 aa).

ATP is bound at residue 126–132 (GTHGKTT).

It belongs to the MurCDEF family.

It localises to the cytoplasm. The enzyme catalyses UDP-N-acetyl-alpha-D-muramate + L-alanine + ATP = UDP-N-acetyl-alpha-D-muramoyl-L-alanine + ADP + phosphate + H(+). It functions in the pathway cell wall biogenesis; peptidoglycan biosynthesis. Cell wall formation. This Salmonella arizonae (strain ATCC BAA-731 / CDC346-86 / RSK2980) protein is UDP-N-acetylmuramate--L-alanine ligase.